A 476-amino-acid polypeptide reads, in one-letter code: Trigger factor (476 aa).

The region spanning 174-261 (GDIAVVSFKG…LKDLKEKELP (88 aa)) is the PPIase FKBP-type domain. Residues 436 to 476 (KENTTKTSKTTKNSKTTKATKTTKTTKTTKTSKTQNKKEKK) form a disordered region. A compositionally biased stretch (low complexity) spans 440 to 469 (TKTSKTTKNSKTTKATKTTKTTKTTKTSKT).

It belongs to the FKBP-type PPIase family. Tig subfamily.

It localises to the cytoplasm. It carries out the reaction [protein]-peptidylproline (omega=180) = [protein]-peptidylproline (omega=0). Functionally, involved in protein export. Acts as a chaperone by maintaining the newly synthesized protein in an open conformation. Functions as a peptidyl-prolyl cis-trans isomerase. The protein is Trigger factor of Prochlorococcus marinus (strain MIT 9215).